We begin with the raw amino-acid sequence, 229 residues long: Potassium/proton antiporter CemA (229 aa).

3 consecutive transmembrane segments (helical) span residues 7–27 (FTPLFYLASIVFLPWWISFSV), 107–127 (ILHFSTNIICFIILSGYSILG), and 189–209 (IISGLVSTFPVILDTIFKYWI).

Belongs to the CemA family.

The protein resides in the plastid. The protein localises to the chloroplast inner membrane. It carries out the reaction K(+)(in) + H(+)(out) = K(+)(out) + H(+)(in). Its function is as follows. Contributes to K(+)/H(+) antiport activity by supporting proton efflux to control proton extrusion and homeostasis in chloroplasts in a light-dependent manner to modulate photosynthesis. Prevents excessive induction of non-photochemical quenching (NPQ) under continuous-light conditions. Indirectly promotes efficient inorganic carbon uptake into chloroplasts. This chain is Potassium/proton antiporter CemA, found in Atropa belladonna (Belladonna).